Here is a 209-residue protein sequence, read N- to C-terminus: Thymidylate kinase (209 aa).

7-14 (GVEGSGKS) serves as a coordination point for ATP.

The protein belongs to the thymidylate kinase family.

It catalyses the reaction dTMP + ATP = dTDP + ADP. Phosphorylation of dTMP to form dTDP in both de novo and salvage pathways of dTTP synthesis. This is Thymidylate kinase from Solidesulfovibrio magneticus (strain ATCC 700980 / DSM 13731 / RS-1) (Desulfovibrio magneticus).